The sequence spans 142 residues: MHSSYSHFLQRLRTSVSYLSVSHFPSTSSHRLFSTTIGVFARKKMPLLTESERTEQLSGLKTAGWKLVEGRDAIQKEFHFKDFNEAFGFMTRVGLKAEKMDHHPEWFNVYNKVDITLSTHDCGGLSPNDVKLATFIESIVKK.

This sequence belongs to the pterin-4-alpha-carbinolamine dehydratase family.

It catalyses the reaction (4aS,6R)-4a-hydroxy-L-erythro-5,6,7,8-tetrahydrobiopterin = (6R)-L-erythro-6,7-dihydrobiopterin + H2O. This chain is Putative pterin-4-alpha-carbinolamine dehydratase (pcbd-1), found in Caenorhabditis elegans.